The sequence spans 329 residues: MTLRNDWTREEIQALYEQPFLDLVFKAQQVHREHFTANTIQVSTLLSIKTGKCPEDCKYCSQSAHYDSKLEAEKRIAVEKVISEAKAAKDSGSSRFCMGAAWRNPHERDMPYVLEMVREVKALGMETCMTLGMLNQSQAERLKDAGLDYYNHNLDTSRKYYSHIISTRTFDDRLNTLDYVRQAGMKVCSGGIVGLGESREDRIGLLHELATLPIHPESVPINMLVPIEGTPLADVEKLDVIEWIRTIAVARIIMPHSYIRLSAGRESLSDSDQALAFMAGANSLFSGDKLLTTPNAGEGKDQALFNKLGLTAEKPKPTVSDLSVDAMSA.

Residues 38–262 (NTIQVSTLLS…IMPHSYIRLS (225 aa)) enclose the Radical SAM core domain. Cys53, Cys57, and Cys60 together coordinate [4Fe-4S] cluster. Residues Cys97, Cys128, Cys188, and Arg260 each coordinate [2Fe-2S] cluster.

Belongs to the radical SAM superfamily. Biotin synthase family. Homodimer. It depends on [4Fe-4S] cluster as a cofactor. [2Fe-2S] cluster serves as cofactor.

The enzyme catalyses (4R,5S)-dethiobiotin + (sulfur carrier)-SH + 2 reduced [2Fe-2S]-[ferredoxin] + 2 S-adenosyl-L-methionine = (sulfur carrier)-H + biotin + 2 5'-deoxyadenosine + 2 L-methionine + 2 oxidized [2Fe-2S]-[ferredoxin]. It participates in cofactor biosynthesis; biotin biosynthesis; biotin from 7,8-diaminononanoate: step 2/2. Functionally, catalyzes the conversion of dethiobiotin (DTB) to biotin by the insertion of a sulfur atom into dethiobiotin via a radical-based mechanism. This is Biotin synthase from Acinetobacter baumannii (strain SDF).